We begin with the raw amino-acid sequence, 313 residues long: Dihydroorotate dehydrogenase (fumarate) (313 aa).

Residues Ala20 and 44 to 45 (KS) each bind FMN. Substrate is bound by residues Lys44, 68-72 (NSMGL), and Asn128. Asn128 lines the FMN pocket. The Nucleophile role is filled by Cys131. Substrate is bound at residue Asn133. FMN-binding residues include Lys165 and Val194. Residue 195 to 196 (NS) participates in substrate binding. Residues Gly223, Cys249, 249–251 (CGG), and 272–273 (GT) each bind FMN.

The protein belongs to the dihydroorotate dehydrogenase family. Type 1 subfamily. In terms of assembly, homodimer. The cofactor is FMN.

Its subcellular location is the cytoplasm. It carries out the reaction (S)-dihydroorotate + fumarate = orotate + succinate. It functions in the pathway pyrimidine metabolism; UMP biosynthesis via de novo pathway. Catalyzes the conversion of dihydroorotate to orotate with fumarate as the electron acceptor. Molecular oxygen can replace fumarate in vitro. This Trypanosoma brucei brucei (strain 927/4 GUTat10.1) protein is Dihydroorotate dehydrogenase (fumarate).